The primary structure comprises 462 residues: Argininosuccinate lyase (462 aa).

It belongs to the lyase 1 family. Argininosuccinate lyase subfamily.

The protein resides in the cytoplasm. It catalyses the reaction 2-(N(omega)-L-arginino)succinate = fumarate + L-arginine. It functions in the pathway amino-acid biosynthesis; L-arginine biosynthesis; L-arginine from L-ornithine and carbamoyl phosphate: step 3/3. This Bacillus mycoides (strain KBAB4) (Bacillus weihenstephanensis) protein is Argininosuccinate lyase.